We begin with the raw amino-acid sequence, 294 residues long: Acetylglutamate kinase (294 aa).

Residues 47–48 (GG), R69, and N168 each bind substrate.

The protein belongs to the acetylglutamate kinase family. ArgB subfamily.

The protein localises to the cytoplasm. It catalyses the reaction N-acetyl-L-glutamate + ATP = N-acetyl-L-glutamyl 5-phosphate + ADP. The protein operates within amino-acid biosynthesis; L-arginine biosynthesis; N(2)-acetyl-L-ornithine from L-glutamate: step 2/4. Its function is as follows. Catalyzes the ATP-dependent phosphorylation of N-acetyl-L-glutamate. The polypeptide is Acetylglutamate kinase (Corynebacterium glutamicum (strain ATCC 13032 / DSM 20300 / JCM 1318 / BCRC 11384 / CCUG 27702 / LMG 3730 / NBRC 12168 / NCIMB 10025 / NRRL B-2784 / 534)).